We begin with the raw amino-acid sequence, 376 residues long: Mitogen-activated protein kinase 6 (376 aa).

The Protein kinase domain occupies 43 to 329 (APPIRPIGRG…VDEALHHPYL (287 aa)). Residues 49-57 (IGRGAYGIV) and K72 each bind ATP. Residue D169 is the Proton acceptor of the active site. Phosphothreonine is present on T201. The TXY signature appears at 201–203 (TEY). At Y203 the chain carries Phosphotyrosine.

This sequence belongs to the protein kinase superfamily. CMGC Ser/Thr protein kinase family. MAP kinase subfamily. Post-translationally, dually phosphorylated on Thr-201 and Tyr-203, which activates the enzyme.

It catalyses the reaction L-seryl-[protein] + ATP = O-phospho-L-seryl-[protein] + ADP + H(+). The enzyme catalyses L-threonyl-[protein] + ATP = O-phospho-L-threonyl-[protein] + ADP + H(+). With respect to regulation, activated by threonine and tyrosine phosphorylation. The sequence is that of Mitogen-activated protein kinase 6 (MPK6) from Oryza sativa subsp. japonica (Rice).